The sequence spans 105 residues: Small ribosomal subunit protein uS10 (105 aa).

This sequence belongs to the universal ribosomal protein uS10 family. Part of the 30S ribosomal subunit.

Its function is as follows. Involved in the binding of tRNA to the ribosomes. The chain is Small ribosomal subunit protein uS10 from Nostoc punctiforme (strain ATCC 29133 / PCC 73102).